Here is a 668-residue protein sequence, read N- to C-terminus: UvrABC system protein B (668 aa).

Residues 36–423 (DNIKGGEKAQ…TETVVEQIIR (388 aa)) enclose the Helicase ATP-binding domain. Residue 49 to 56 (GATGTGKT) coordinates ATP. A Beta-hairpin motif is present at residues 102–125 (YYDYYQPEAYVPSSDTYIEKDSSI). In terms of domain architecture, Helicase C-terminal spans 440 to 606 (QMDDLLGEIN…TIKKEIRDLI (167 aa)). One can recognise a UVR domain in the interval 632–667 (QEAIKKLQKQMHEAAELLDFELAAQIRDMVLELKSM).

It belongs to the UvrB family. In terms of assembly, forms a heterotetramer with UvrA during the search for lesions. Interacts with UvrC in an incision complex.

Its subcellular location is the cytoplasm. Functionally, the UvrABC repair system catalyzes the recognition and processing of DNA lesions. A damage recognition complex composed of 2 UvrA and 2 UvrB subunits scans DNA for abnormalities. Upon binding of the UvrA(2)B(2) complex to a putative damaged site, the DNA wraps around one UvrB monomer. DNA wrap is dependent on ATP binding by UvrB and probably causes local melting of the DNA helix, facilitating insertion of UvrB beta-hairpin between the DNA strands. Then UvrB probes one DNA strand for the presence of a lesion. If a lesion is found the UvrA subunits dissociate and the UvrB-DNA preincision complex is formed. This complex is subsequently bound by UvrC and the second UvrB is released. If no lesion is found, the DNA wraps around the other UvrB subunit that will check the other stand for damage. The polypeptide is UvrABC system protein B (Streptococcus thermophilus (strain CNRZ 1066)).